We begin with the raw amino-acid sequence, 183 residues long: Caspase recruitment domain-containing protein 19 (183 aa).

Cysteines 7 and 77 form a disulfide. Positions 8-99 constitute a CARD domain; sequence DRLVQDTPFL…PLHSHLPSRY (92 aa). A helical membrane pass occupies residues 122–142; the sequence is GPMSFLAGLGLAAGLALLLYC.

As to quaternary structure, associates with BCL10 by CARD-CARD interaction.

It is found in the endoplasmic reticulum membrane. The protein localises to the mitochondrion membrane. Plays a role in inhibiting the effects of BCL10-induced activation of NF-kappa-B. This chain is Caspase recruitment domain-containing protein 19, found in Mus musculus (Mouse).